A 545-amino-acid polypeptide reads, in one-letter code: Purple acid phosphatase 13 (545 aa).

The first 25 residues, 1–25, serve as a signal peptide directing secretion; that stretch reads MVVKYTMSMSFFVIFASTVTIIVHG. N-linked (GlcNAc...) asparagine glycosylation is found at N125 and N145. Position 203 (D203) interacts with Fe cation. A glycan (N-linked (GlcNAc...) asparagine) is linked at N209. Y233 lines the Fe cation pocket. N-linked (GlcNAc...) asparagine glycans are attached at residues N240, N254, N306, N321, N351, and N367. Residue H389 is the Proton donor of the active site. H416 is a binding site for Zn(2+). Substrate is bound at residue 416–418; it reads HVD. Residues N428, N466, N475, and N510 are each glycosylated (N-linked (GlcNAc...) asparagine).

It belongs to the metallophosphoesterase superfamily. Purple acid phosphatase family. As to quaternary structure, homodimer. It depends on Fe cation as a cofactor. The cofactor is Zn(2+). Expressed in stems, leaves, flowers and siliques.

It is found in the secreted. The catalysed reaction is a phosphate monoester + H2O = an alcohol + phosphate. In Arabidopsis thaliana (Mouse-ear cress), this protein is Purple acid phosphatase 13 (PAP13).